Here is a 478-residue protein sequence, read N- to C-terminus: Membrane-bound lytic murein transglycosylase F (478 aa).

The first 22 residues, 1–22 (MTRFLFAIILGLLLTACQQETV), serve as a signal peptide directing secretion. Residues 23–257 (EETEFVPHKL…HLNEKYFGHV (235 aa)) are non-LT domain. The interval 258–478 (KRFDYIDTRA…PGTLSPDKPK (221 aa)) is LT domain. Residue glutamate 302 is part of the active site. Residues 447–478 (KQQNSEEVAPSDLTAEETPVPAPGTLSPDKPK) are disordered.

The protein in the N-terminal section; belongs to the bacterial solute-binding protein 3 family. This sequence in the C-terminal section; belongs to the transglycosylase Slt family.

Its subcellular location is the cell outer membrane. The catalysed reaction is Exolytic cleavage of the (1-&gt;4)-beta-glycosidic linkage between N-acetylmuramic acid (MurNAc) and N-acetylglucosamine (GlcNAc) residues in peptidoglycan, from either the reducing or the non-reducing ends of the peptidoglycan chains, with concomitant formation of a 1,6-anhydrobond in the MurNAc residue.. Murein-degrading enzyme that degrades murein glycan strands and insoluble, high-molecular weight murein sacculi, with the concomitant formation of a 1,6-anhydromuramoyl product. Lytic transglycosylases (LTs) play an integral role in the metabolism of the peptidoglycan (PG) sacculus. Their lytic action creates space within the PG sacculus to allow for its expansion as well as for the insertion of various structures such as secretion systems and flagella. The sequence is that of Membrane-bound lytic murein transglycosylase F from Shewanella oneidensis (strain ATCC 700550 / JCM 31522 / CIP 106686 / LMG 19005 / NCIMB 14063 / MR-1).